Consider the following 744-residue polypeptide: Vesicle-fusing ATPase (744 aa).

Lysine 105 is modified (N6-acetyllysine). Serine 207 bears the Phosphoserine mark. The residue at position 259 (tyrosine 259) is a Phosphotyrosine. Residues 505 to 510 (NGIIKW) and 545 to 552 (PHSGKTAL) contribute to the ATP site. Threonine 550 provides a ligand contact to Mg(2+). Phosphoserine; by CDK16 is present on serine 569.

This sequence belongs to the AAA ATPase family. As to quaternary structure, homohexamer. Interacts with GABARAP and GABARAPL2. Interacts with GRIA2. Interacts with PLK2, leading to disrupt the interaction with GRIA2. Interacts with MUSK; may regulate MUSK endocytosis and activity. Interacts with CDK16. The cofactor is Mg(2+). Post-translationally, phosphorylation at Ser-569 interferes with homohexamerization.

It localises to the cytoplasm. It catalyses the reaction ATP + H2O = ADP + phosphate + H(+). Its function is as follows. Required for vesicle-mediated transport. Catalyzes the fusion of transport vesicles within the Golgi cisternae. Is also required for transport from the endoplasmic reticulum to the Golgi stack. Seems to function as a fusion protein required for the delivery of cargo proteins to all compartments of the Golgi stack independent of vesicle origin. Interaction with AMPAR subunit GRIA2 leads to influence GRIA2 membrane cycling. The sequence is that of Vesicle-fusing ATPase (NSF) from Cricetulus griseus (Chinese hamster).